Consider the following 277-residue polypeptide: Shikimate dehydrogenase (NADP(+)) (277 aa).

Shikimate is bound by residues 15–17 and Thr-62; that span reads SLS. Lys-66 functions as the Proton acceptor in the catalytic mechanism. Residues Asn-87 and Asp-102 each coordinate shikimate. Residues 127–131, 151–156, and Ile-219 each bind NADP(+); these read GAGGA and NRTVDK. Residue Tyr-221 participates in shikimate binding. An NADP(+)-binding site is contributed by Gly-242.

It belongs to the shikimate dehydrogenase family. In terms of assembly, homodimer.

The enzyme catalyses shikimate + NADP(+) = 3-dehydroshikimate + NADPH + H(+). It participates in metabolic intermediate biosynthesis; chorismate biosynthesis; chorismate from D-erythrose 4-phosphate and phosphoenolpyruvate: step 4/7. Involved in the biosynthesis of the chorismate, which leads to the biosynthesis of aromatic amino acids. Catalyzes the reversible NADPH linked reduction of 3-dehydroshikimate (DHSA) to yield shikimate (SA). This chain is Shikimate dehydrogenase (NADP(+)), found in Bacillus cereus (strain AH820).